The primary structure comprises 432 residues: Glutamate-1-semialdehyde 2,1-aminomutase (432 aa).

Lys-272 carries the post-translational modification N6-(pyridoxal phosphate)lysine.

It belongs to the class-III pyridoxal-phosphate-dependent aminotransferase family. HemL subfamily. In terms of assembly, homodimer. It depends on pyridoxal 5'-phosphate as a cofactor.

Its subcellular location is the cytoplasm. The enzyme catalyses (S)-4-amino-5-oxopentanoate = 5-aminolevulinate. It participates in porphyrin-containing compound metabolism; protoporphyrin-IX biosynthesis; 5-aminolevulinate from L-glutamyl-tRNA(Glu): step 2/2. It functions in the pathway porphyrin-containing compound metabolism; chlorophyll biosynthesis. This Acaryochloris marina (strain MBIC 11017) protein is Glutamate-1-semialdehyde 2,1-aminomutase.